We begin with the raw amino-acid sequence, 895 residues long: uncharacterized protein (895 aa).

An NAD(+)-binding site is contributed by 2 to 19 (NISVIGTGYVGLIQAVGL). Residue Cys-261 is part of the active site. Positions 468 to 614 (LIGYYLSEGW…LLILLQLLGI (147 aa)) constitute a DOD-type homing endonuclease domain.

Belongs to the UDP-glucose/GDP-mannose dehydrogenase family. Post-translationally, this protein undergoes a protein self splicing that involves a post-translational excision of the intervening region (intein) followed by peptide ligation.

This is an uncharacterized protein from Methanocaldococcus jannaschii (strain ATCC 43067 / DSM 2661 / JAL-1 / JCM 10045 / NBRC 100440) (Methanococcus jannaschii).